The chain runs to 373 residues: Melanoma-associated antigen C2 (373 aa).

Residues 1 to 102 (MPPVPGVPFR…QGPSQSPLSS (102 aa)) form a disordered region. Over residues 40–60 (SSASSTLYLVFSPSSFSTSSS) the composition is skewed to low complexity. The span at 85-94 (SSPPQGPPQG) shows a compositional bias: pro residues. Positions 135 to 373 (SSFTYTLDEK…VMSSNVSFSE (239 aa)) are interaction with TRIM28. Residues 141–336 (LDEKVAELVE…SSFPSWYKDA (196 aa)) form the MAGE domain.

As to quaternary structure, interacts with TRIM28 and UBE2H. As to expression, not expressed in normal tissues, except in germ cells in the seminiferous tubules and in Purkinje cells of the cerebellum. Expressed in various tumors, including melanoma, lymphoma, as well as pancreatic cancer, mammary gland cancer, non-small cell lung cancer and liver cancer. In hepatocellular carcinoma, there is an inverse correlation between tumor differentiation and protein expression, i.e. the lower the differentiation, the higher percentage of expression.

Its subcellular location is the cytoplasm. It is found in the nucleus. Proposed to enhance ubiquitin ligase activity of RING-type zinc finger-containing E3 ubiquitin-protein ligases. In vitro enhances ubiquitin ligase activity of TRIM28 and stimulates p53/TP53 ubiquitination in presence of Ubl-conjugating enzyme UBE2H leading to p53/TP53 degradation. Proposed to act through recruitment and/or stabilization of the Ubl-conjugating enzymes (E2) at the E3:substrate complex. This is Melanoma-associated antigen C2 (MAGEC2) from Homo sapiens (Human).